Reading from the N-terminus, the 57-residue chain is MAVPFRRTSKTRKRKRRTHYKLAVPGMVKCPECGEMKLAHRVCKECGSYKGQDVLSK.

This sequence belongs to the bacterial ribosomal protein bL32 family.

The protein is Large ribosomal subunit protein bL32 (rpmF) of Halalkalibacterium halodurans (strain ATCC BAA-125 / DSM 18197 / FERM 7344 / JCM 9153 / C-125) (Bacillus halodurans).